We begin with the raw amino-acid sequence, 360 residues long: Peptide chain release factor 1 (360 aa).

The residue at position 237 (Gln-237) is an N5-methylglutamine.

Belongs to the prokaryotic/mitochondrial release factor family. Post-translationally, methylated by PrmC. Methylation increases the termination efficiency of RF1.

It is found in the cytoplasm. Its function is as follows. Peptide chain release factor 1 directs the termination of translation in response to the peptide chain termination codons UAG and UAA. This Pseudomonas fluorescens (strain SBW25) protein is Peptide chain release factor 1.